Reading from the N-terminus, the 134-residue chain is MDSCHTTKSCVLILLVVLLCAERAQGLECYNCLGVSLGIACKSITCPYPDAVCISQQVELIVDSQRRKVKNKLCFPFCPANLENMEILGTTVNVNTSCCKEDLCNAPFSTGGSTWTMTRVLLLNLGSVFLQTLL.

The N-terminal stretch at 1-26 is a signal peptide; that stretch reads MDSCHTTKSCVLILLVVLLCAERAQG. One can recognise a UPAR/Ly6 domain in the interval 27–119; that stretch reads LECYNCLGVS…TGGSTWTMTR (93 aa). 5 disulfides stabilise this stretch: Cys-29/Cys-53, Cys-32/Cys-41, Cys-46/Cys-74, Cys-78/Cys-98, and Cys-99/Cys-104. Residue Gly-112 is the site of GPI-anchor amidated glycine attachment. Residues 113 to 134 constitute a propeptide, removed in mature form; the sequence is STWTMTRVLLLNLGSVFLQTLL.

The protein localises to the cell membrane. This chain is Lymphocyte antigen 6F (Ly6f), found in Mus musculus (Mouse).